Reading from the N-terminus, the 354-residue chain is MDLTVEPNLHSLITSTTHKWIFVGGKGGVGKTTSSCSIAIQMALSQPNKQFLLISTDPAHNLSDAFGEKFGKDARKVTGMNNLSCMEIDPSAALKDMNDMAVSRANNNGSDGQGDDLGSLLQGGALADLTGSIPGIDEALSFMEVMKHIKRQEQGEGETFDTVIFDTAPTGHTLRFLQLPNTLSKLLEKFGEITNKLGPMLNSFMGAGNVDISGKLNELKANVETIRQQFTDPDLTTFVCVCISEFLSLYETERLIQELISYDMDVNSIIVNQLLFAENDQEHNCKRCQARWKMQKKYLDQIDELYEDFHVVKMPLCAGEIRGLNNLTKFSQFLNKEYNPITDGKVIYELEDKE.

26–33 (KGGVGKTT) serves as a coordination point for ATP. Aspartate 57 is an active-site residue. Positions 245 and 272 each coordinate ATP. The Zn(2+) site is built by cysteine 285 and cysteine 288.

This sequence belongs to the arsA ATPase family. Homodimer. Component of the Golgi to ER traffic (GET) complex, which is composed of GET1, GET2 and GET3. Within the complex, GET1 and GET2 form a heterotetramer which is stabilized by phosphatidylinositol binding and which binds to the GET3 homodimer. Interacts with the chloride channel protein GEF1.

The protein resides in the cytoplasm. The protein localises to the endoplasmic reticulum. It is found in the golgi apparatus. Functionally, ATPase required for the post-translational delivery of tail-anchored (TA) proteins to the endoplasmic reticulum. Recognizes and selectively binds the transmembrane domain of TA proteins in the cytosol. This complex then targets to the endoplasmic reticulum by membrane-bound receptors GET1 and GET2, where the tail-anchored protein is released for insertion. This process is regulated by ATP binding and hydrolysis. ATP binding drives the homodimer towards the closed dimer state, facilitating recognition of newly synthesized TA membrane proteins. ATP hydrolysis is required for insertion. Subsequently, the homodimer reverts towards the open dimer state, lowering its affinity for the GET1-GET2 receptor, and returning it to the cytosol to initiate a new round of targeting. Cooperates with the HDEL receptor ERD2 to mediate the ATP-dependent retrieval of resident ER proteins that contain a C-terminal H-D-E-L retention signal from the Golgi to the ER. Involved in low-level resistance to the oxyanions arsenite and arsenate, and in heat tolerance. The sequence is that of ATPase GET3 from Saccharomyces cerevisiae (strain RM11-1a) (Baker's yeast).